The sequence spans 362 residues: Peptide chain release factor 1 (362 aa).

Glutamine 237 is subject to N5-methylglutamine.

This sequence belongs to the prokaryotic/mitochondrial release factor family. Post-translationally, methylated by PrmC. Methylation increases the termination efficiency of RF1.

It is found in the cytoplasm. Its function is as follows. Peptide chain release factor 1 directs the termination of translation in response to the peptide chain termination codons UAG and UAA. This chain is Peptide chain release factor 1, found in Aeromonas salmonicida (strain A449).